Consider the following 561-residue polypeptide: Urocanate hydratase (561 aa).

NAD(+)-binding positions include 52 to 53, Gln130, 176 to 178, Glu196, Arg201, 242 to 243, 267 to 271, 277 to 278, and Tyr326; these read GG, GMG, NA, QTSAH, and YL. Residue Cys414 is part of the active site. Gly496 lines the NAD(+) pocket.

It belongs to the urocanase family. NAD(+) serves as cofactor.

It localises to the cytoplasm. It catalyses the reaction 4-imidazolone-5-propanoate = trans-urocanate + H2O. It participates in amino-acid degradation; L-histidine degradation into L-glutamate; N-formimidoyl-L-glutamate from L-histidine: step 2/3. Catalyzes the conversion of urocanate to 4-imidazolone-5-propionate. The sequence is that of Urocanate hydratase from Rhizobium rhizogenes (strain K84 / ATCC BAA-868) (Agrobacterium radiobacter).